We begin with the raw amino-acid sequence, 251 residues long: Probable transcriptional regulatory protein PMI1113 (251 aa).

It belongs to the TACO1 family.

The protein resides in the cytoplasm. In Proteus mirabilis (strain HI4320), this protein is Probable transcriptional regulatory protein PMI1113.